We begin with the raw amino-acid sequence, 571 residues long: ATP-dependent RNA helicase RhlB (571 aa).

The Q motif signature appears at 9 to 37 (VTFSSFDLHPALIAGLESAGFTRCTPIQA). A Helicase ATP-binding domain is found at 40 to 220 (LPVALPGGDV…YEHMNEPEKL (181 aa)). ATP is bound at residue 53–60 (AQTGTGKT). Residues 166 to 169 (DEAD) carry the DEAD box motif. The Helicase C-terminal domain occupies 231–393 (RVRQRIYFPS…PVTSELLTPL (163 aa)). The interval 391 to 558 (TPLPRAPRVP…KPSGSPSLLS (168 aa)) is disordered. Residues 402–411 (EGEEADDDAG) show a composition bias toward acidic residues. Residues 419–432 (REAREQRAAEEQRR) show a composition bias toward basic and acidic residues. Residues 435–448 (GRGGPGGSRSGSGG) are compositionally biased toward gly residues. Residues 449 to 460 (GRRDGAGADGKP) are compositionally biased toward basic and acidic residues. Residues 483-497 (VVAAVAAQAPSAGVA) are compositionally biased toward low complexity. Residues 503-512 (PRKRRRRRNG) show a composition bias toward basic residues. Residues 539-558 (VVAKPVRAAAKPSGSPSLLS) are compositionally biased toward low complexity.

The protein belongs to the DEAD box helicase family. RhlB subfamily. In terms of assembly, component of the RNA degradosome, which is a multiprotein complex involved in RNA processing and mRNA degradation.

The protein localises to the cytoplasm. The enzyme catalyses ATP + H2O = ADP + phosphate + H(+). In terms of biological role, DEAD-box RNA helicase involved in RNA degradation. Has RNA-dependent ATPase activity and unwinds double-stranded RNA. In Xanthomonas axonopodis pv. citri (strain 306), this protein is ATP-dependent RNA helicase RhlB.